We begin with the raw amino-acid sequence, 432 residues long: Isocitrate lyase (432 aa).

The interval 1 to 24 (MSNVGKPRTAQEIQQDWDTNPRWN) is disordered. The segment covering 11–22 (QEIQQDWDTNPR) has biased composition (polar residues). 93-95 (SGW) lines the substrate pocket. Asp-155 is a binding site for Mg(2+). The Proton acceptor role is filled by Cys-193. Residues 194 to 195 (GH), Arg-230, 315 to 319 (NCSPS), and Thr-349 contribute to the substrate site.

The protein belongs to the isocitrate lyase/PEP mutase superfamily. Isocitrate lyase family. In terms of assembly, homotetramer. It depends on Mg(2+) as a cofactor.

The catalysed reaction is D-threo-isocitrate = glyoxylate + succinate. It functions in the pathway carbohydrate metabolism; glyoxylate cycle; (S)-malate from isocitrate: step 1/2. Its activity is regulated as follows. Inhibited by 3-phosphoglycerate, 6-phosphogluconate, phosphoenolpyruvate (PEP), fructose 1,6-bisphosphate, glycolate, oxalate, and itaconate. Its function is as follows. Involved in the metabolic adaptation in response to environmental changes. Catalyzes the reversible formation of succinate and glyoxylate from isocitrate, a key step of the glyoxylate cycle, which operates as an anaplerotic route for replenishing the tricarboxylic acid cycle during growth on fatty acid substrates. This Corynebacterium glutamicum (strain ATCC 13032 / DSM 20300 / JCM 1318 / BCRC 11384 / CCUG 27702 / LMG 3730 / NBRC 12168 / NCIMB 10025 / NRRL B-2784 / 534) protein is Isocitrate lyase.